The primary structure comprises 390 residues: MTDQTLEQIFEQQFGQSSTHRFFAPGRINLIGEHTDYNGGHVFPCALTLGTHAVARKRDDVVFRFYSLNFEDDGIIEVAGDDLTPQSAHGWANYAKGMIHVLREAGYRIDTGCDILIKGDIPNGAGLSSSASLELVIGVLLDKLYNLDIDRIDLVKYGQQVENQYIGVNSGIMDQFAIGMGKAGSGLLLDCETLDYTYAPLDLSGYTIIIMNTNKRRELADSKYNERRSECEAALAYLQQYRPYASLGQWSMNEFETVSFEDERLERRARHAISENERTLQALDALKEDRLEAFGQLMNASHRSLRVDYEVTGKELDTLVEAAWAQPGVLGARMTGAGFGGCAIAIVEDDTVETFMTAVGHAYETEIGYPASFYTATVGDGAREVEQEVI.

33–36 (EHTD) lines the substrate pocket. ATP-binding positions include Ser67 and 124–130 (GAGLSSS). Mg(2+)-binding residues include Ser130 and Glu162. Asp174 serves as the catalytic Proton acceptor. A substrate-binding site is contributed by Tyr224.

The protein belongs to the GHMP kinase family. GalK subfamily.

It localises to the cytoplasm. It catalyses the reaction alpha-D-galactose + ATP = alpha-D-galactose 1-phosphate + ADP + H(+). It functions in the pathway carbohydrate metabolism; galactose metabolism. Catalyzes the transfer of the gamma-phosphate of ATP to D-galactose to form alpha-D-galactose-1-phosphate (Gal-1-P). This chain is Galactokinase, found in Exiguobacterium sibiricum (strain DSM 17290 / CCUG 55495 / CIP 109462 / JCM 13490 / 255-15).